The primary structure comprises 202 residues: Recombination protein RecR (202 aa).

A C4-type zinc finger spans residues 58–73 (CANCGNLTDKKLCDIC). A Toprim domain is found at 81-178 (SVITVVEDSM…KVSRIAMGVP (98 aa)).

Belongs to the RecR family.

In terms of biological role, may play a role in DNA repair. It seems to be involved in an RecBC-independent recombinational process of DNA repair. It may act with RecF and RecO. In Finegoldia magna (strain ATCC 29328 / DSM 20472 / WAL 2508) (Peptostreptococcus magnus), this protein is Recombination protein RecR.